The sequence spans 434 residues: UDP-N-acetylmuramoyl-L-alanyl-D-glutamate--2,6-diaminopimelate ligase (434 aa).

S17 lines the UDP-N-acetyl-alpha-D-muramoyl-L-alanyl-D-glutamate pocket. Residue 68–74 coordinates ATP; that stretch reads GTNGKTT. UDP-N-acetyl-alpha-D-muramoyl-L-alanyl-D-glutamate is bound by residues 111–112, S138, Q144, and R146; that span reads TT. An N6-carboxylysine modification is found at K178. Residues R326, 350-353, G401, and E405 contribute to the meso-2,6-diaminopimelate site; that span reads DNPR. The Meso-diaminopimelate recognition motif signature appears at 350–353; sequence DNPR.

This sequence belongs to the MurCDEF family. MurE subfamily. Mg(2+) serves as cofactor. In terms of processing, carboxylation is probably crucial for Mg(2+) binding and, consequently, for the gamma-phosphate positioning of ATP.

It localises to the cytoplasm. It carries out the reaction UDP-N-acetyl-alpha-D-muramoyl-L-alanyl-D-glutamate + meso-2,6-diaminopimelate + ATP = UDP-N-acetyl-alpha-D-muramoyl-L-alanyl-gamma-D-glutamyl-meso-2,6-diaminopimelate + ADP + phosphate + H(+). It participates in cell wall biogenesis; peptidoglycan biosynthesis. Catalyzes the addition of meso-diaminopimelic acid to the nucleotide precursor UDP-N-acetylmuramoyl-L-alanyl-D-glutamate (UMAG) in the biosynthesis of bacterial cell-wall peptidoglycan. This is UDP-N-acetylmuramoyl-L-alanyl-D-glutamate--2,6-diaminopimelate ligase from Wolinella succinogenes (strain ATCC 29543 / DSM 1740 / CCUG 13145 / JCM 31913 / LMG 7466 / NCTC 11488 / FDC 602W) (Vibrio succinogenes).